A 1476-amino-acid chain; its full sequence is MQKSPLEKASFISKLFFSWTTPILRKGYRHHLELSDIYQAPSADSADHLSEKLEREWDREQASKKNPQLIHALRRCFFWRFLFYGILLYLGEVTKAVQPVLLGRIIASYDPENKVERSIAIYLGIGLCLLFIVRTLLLHPAIFGLHRIGMQMRTAMFSLIYKKTLKLSSRVLDKISIGQLVSLLSNNLNKFDEGLALAHFIWIAPLQVTLLMGLLWDLLQFSAFCGLGLLIILVIFQAILGKMMVKYRDQRAAKINERLVITSEIIDNIYSVKAYCWESAMEKMIENLREVELKMTRKAAYMRFFTSSAFFFSGFFVVFLSVLPYTVINGIVLRKIFTTISFCIVLRMSVTRQFPTAVQIWYDSFGMIRKIQDFLQKQEYKVLEYNLMTTGIIMENVTAFWEEGFGELLEKVQQSNGDRKHSSDENNVSFSHLCLVGNPVLKNINLNIEKGEMLAITGSTGSGKTSLLMLILGELEASEGIIKHSGRVSFCSQFSWIMPGTIKENIIFGVSYDEYRYKSVVKACQLQQDITKFAEQDNTVLGEGGVTLSGGQRARISLARAVYKDADLYLLDSPFGYLDVFTEEQVFESCVCKLMANKTRILVTSKMEHLRKADKILILHQGSSYFYGTFSELQSLRPDFSSKLMGYDTFDQFTEERRSSILTETLRRFSVDDSSAPWSKPKQSFRQTGEVGEKRKNSILNSFSSVRKISIVQKTPLCIDGESDDLQEKRLSLVPDSEQGEAALPRSNMIATGPTFPGRRRQSVLDLMTFTPNSGSSNLQRTRTSIRKISLVPQISLNEVDVYSRRLSQDSTLNITEEINEEDLKECFLDDVIKIPPVTTWNTYLRYFTLHKGLLLVLIWCVLVFLVEVAASLFVLWLLKNNPVNSGNNGTKISNSSYVVIITSTSFYYIFYIYVGVADTLLALSLFRGLPLVHTLITASKILHRKMLHSILHAPMSTISKLKAGGILNRFSKDIAILDDFLPLTIFDFIQLVFIVIGAIIVVSALQPYIFLATVPGLVVFILLRAYFLHTAQQLKQLESEGRSPIFTHLVTSLKGLWTLRAFRRQTYFETLFHKALNLHTANWFMYLATLRWFQMRIDMIFVLFFIVVTFISILTTGEGEGTAGIILTLAMNIMSTLQWAVNSSIDTDSLMRSVSRVFKFIDIQTEESMYTQIIKELPREGSSDVLVIKNEHVKKSDIWPSGGEMVVKDLTVKYMDDGNAVLENISFSISPGQRVGLLGRTGSGKSTLLSAFLRMLNIKGDIEIDGVSWNSVTLQEWRKAFGVITQKVFIFSGTFRQNLDPNGKWKDEEIWKVADEVGLKSVIEQFPGQLNFTLVDGGYVLSHGHKQLMCLARSVLSKAKIILLDEPSAHLDPITYQVIRRVLKQAFAGCTVILCEHRIEAMLDCQRFLVIEESNVWQYDSLQALLSEKSIFQQAISSSEKMRFFQGRHSSKHKPRTQITALKEETEEEVQETRL.

The Cytoplasmic segment spans residues 1-77 (MQKSPLEKAS…QLIHALRRCF (77 aa)). Residues 78-98 (FWRFLFYGILLYLGEVTKAVQ) form a helical membrane-spanning segment. One can recognise an ABC transmembrane type-1 1 domain in the interval 81–365 (FLFYGILLYL…TAVQIWYDSF (285 aa)). At 99–122 (PVLLGRIIASYDPENKVERSIAIY) the chain is on the extracellular side. A helical transmembrane segment spans residues 123 to 146 (LGIGLCLLFIVRTLLLHPAIFGLH). Topologically, residues 147–195 (RIGMQMRTAMFSLIYKKTLKLSSRVLDKISIGQLVSLLSNNLNKFDEGL) are cytoplasmic. Residues 196-216 (ALAHFIWIAPLQVTLLMGLLW) traverse the membrane as a helical segment. Topologically, residues 217-222 (DLLQFS) are extracellular. A helical transmembrane segment spans residues 223 to 243 (AFCGLGLLIILVIFQAILGKM). Residues 244 to 298 (MVKYRDQRAAKINERLVITSEIIDNIYSVKAYCWESAMEKMIENLREVELKMTRK) are Cytoplasmic-facing. Residues 299–319 (AAYMRFFTSSAFFFSGFFVVF) traverse the membrane as a helical segment. Over 320 to 339 (LSVLPYTVINGIVLRKIFTT) the chain is Extracellular. The helical transmembrane segment at 340 to 358 (ISFCIVLRMSVTRQFPTAV) threads the bilayer. Over 359–853 (QIWYDSFGMI…YLRYFTLHKG (495 aa)) the chain is Cytoplasmic. Residues Trp-401, 458 to 465 (GSTGSGKT), and Gln-493 each bind ATP. Positions 423–646 (SDENNVSFSH…RPDFSSKLMG (224 aa)) constitute an ABC transporter 1 domain. Residue Cys-524 is the site of S-palmitoyl cysteine attachment. Ser-549 and Ser-660 each carry phosphoserine. The interval 654-826 (TEERRSSILT…EEINEEDLKE (173 aa)) is disordered R region. Ser-670 is subject to Phosphoserine; by PKA. 3 positions are modified to phosphoserine: Ser-684, Ser-698, and Ser-710. Thr-715 bears the Phosphothreonine mark. Phosphoserine is present on residues Ser-732, Ser-763, Ser-785, Ser-790, and Ser-808. The chain crosses the membrane as a helical span at residues 854–874 (LLLVLIWCVLVFLVEVAASLF). The ABC transmembrane type-1 2 domain occupies 854–1153 (LLLVLIWCVL…SSIDTDSLMR (300 aa)). Topologically, residues 875–913 (VLWLLKNNPVNSGNNGTKISNSSYVVIITSTSFYYIFYI) are extracellular. N-linked (GlcNAc...) asparagine glycosylation is found at Asn-889 and Asn-895. A discontinuously helical membrane pass occupies residues 914 to 934 (YVGVADTLLALSLFRGLPLVH). The Cytoplasmic portion of the chain corresponds to 935–985 (TLITASKILHRKMLHSILHAPMSTISKLKAGGILNRFSKDIAILDDFLPLT). Residues 986 to 1006 (IFDFIQLVFIVIGAIIVVSAL) traverse the membrane as a helical segment. The Extracellular portion of the chain corresponds to 1007–1008 (QP). Residues 1009–1029 (YIFLATVPGLVVFILLRAYFL) traverse the membrane as a helical segment. The Cytoplasmic portion of the chain corresponds to 1030–1090 (HTAQQLKQLE…TANWFMYLAT (61 aa)). A helical membrane pass occupies residues 1091–1111 (LRWFQMRIDMIFVLFFIVVTF). Residues 1112–1125 (ISILTTGEGEGTAG) are Extracellular-facing. A helical membrane pass occupies residues 1126–1146 (IILTLAMNIMSTLQWAVNSSI). Topologically, residues 1147–1476 (DTDSLMRSVS…TEEEVQETRL (330 aa)) are cytoplasmic. Positions 1208 to 1439 (VKDLTVKYMD…KSIFQQAISS (232 aa)) constitute an ABC transporter 2 domain. ATP is bound by residues Tyr-1215 and 1240–1247 (GRTGSGKS). The segment at 1382–1476 (RVLKQAFAGC…TEEEVQETRL (95 aa)) is interaction with GORASP2. The S-palmitoyl cysteine moiety is linked to residue Cys-1391. Residues Ser-1440 and Ser-1452 each carry the phosphoserine modification. Residues 1446 to 1476 (FQGRHSSKHKPRTQITALKEETEEEVQETRL) form a disordered region. Over residues 1466–1476 (ETEEEVQETRL) the composition is skewed to acidic residues. The short motif at 1474–1476 (TRL) is the PDZ-binding element.

This sequence belongs to the ABC transporter superfamily. ABCC family. CFTR transporter (TC 3.A.1.202) subfamily. As to quaternary structure, monomer; does not require oligomerization for channel activity. May form oligomers in the membrane. Interacts with SLC26A3, SLC26A6 and NHERF1. Interacts with SHANK2. Interacts with MYO6. Interacts (via C-terminus) with GOPC (via PDZ domain); this promotes CFTR internalization and thereby decreases channel activity. Interacts with SLC4A7 through NHERF1. Found in a complex with MYO5B and RAB11A. Interacts with ANO1. Interacts with SLC26A8. Interacts with AHCYL1; the interaction increases CFTR activity. Interacts with CSE1L. The core-glycosylated form interacts with GORASP2 (via PDZ GRASP-type 1 domain) in respone to ER stress. Interacts with MARCHF2; the interaction leads to CFTR ubiqtuitination and degradation. Interacts with ADGRG2. Post-translationally, N-glycosylated. Phosphorylated; cAMP treatment promotes phosphorylation and activates the channel. Dephosphorylation decreases the ATPase activity (in vitro). Phosphorylation at PKA sites activates the channel. Phosphorylation at PKC sites enhances the response to phosphorylation by PKA. Phosphorylated by AMPK; this inhibits channel activity. In terms of processing, ubiquitinated, leading to its degradation in the lysosome. Deubiquitination by USP10 in early endosomes enhances its endocytic recycling to the cell membrane. Ubiquitinated by RNF185 during ER stress. Ubiquitinated by MARCHF2. In terms of tissue distribution, expressed in the epididymis (at protein level). In the initial segment of the epididymis, detected on both the luminal and basolateral sides of the ducts where it is expressed in the duct columnar cells as well as in the interstitial smooth muscle cells. Expressed in sperm in the caput. In the cauda, detected along the luminal border but not continuously and is also expressed on the basolateral surface. Within the caudal lumen, detected on sperm. Isoform 1: Expressed in a variety of epithelial tissues including colon, kidney, lung, small intestine, pancreatic duct and testis. Isoform 2: Expressed only in testis. Isoform 3: Expressed only in testis.

It localises to the apical cell membrane. It is found in the early endosome membrane. The protein localises to the cell membrane. Its subcellular location is the recycling endosome membrane. The protein resides in the endoplasmic reticulum membrane. It localises to the nucleus. It catalyses the reaction ATP + H2O + closed Cl(-) channel = ADP + phosphate + open Cl(-) channel.. The catalysed reaction is chloride(in) = chloride(out). It carries out the reaction hydrogencarbonate(in) = hydrogencarbonate(out). The enzyme catalyses ATP + H2O = ADP + phosphate + H(+). Its function is as follows. Epithelial ion channel that plays an important role in the regulation of epithelial ion and water transport and fluid homeostasis. Mediates the transport of chloride ions across the cell membrane. Possesses an intrinsic ATPase activity and utilizes ATP to gate its channel; the passive flow of anions through the channel is gated by cycles of ATP binding and hydrolysis by the ATP-binding domains. The ion channel is also permeable to HCO(3)(-); selectivity depends on the extracellular chloride concentration. Exerts its function also by modulating the activity of other ion channels and transporters. Contributes to the regulation of the pH and the ion content of the epithelial fluid layer. Modulates the activity of the epithelial sodium channel (ENaC) complex, in part by regulating the cell surface expression of the ENaC complex. May regulate bicarbonate secretion and salvage in epithelial cells by regulating the transporter SLC4A7. Can inhibit the chloride channel activity of ANO1. Plays a role in the chloride and bicarbonate homeostasis during sperm epididymal maturation and capacitation. This chain is Cystic fibrosis transmembrane conductance regulator, found in Mus musculus (Mouse).